The sequence spans 498 residues: Elastase (498 aa).

A signal peptide spans 1 to 23 (MKKVSTLDLLFVAIMGVSPAAFA). A propeptide spanning residues 24-197 (ADLIDVSKLP…VLDQWEGLAH (174 aa)) is cleaved from the precursor. C227 and C255 are oxidised to a cystine. T236 is modified (phosphothreonine). Position 333 (D333) interacts with Ca(2+). Position 337 (H337) interacts with Zn(2+). E338 is an active-site residue. Residues H341 and E361 each coordinate Zn(2+). Ca(2+)-binding residues include E369, E372, D380, and L382. Catalysis depends on H420, which acts as the Proton donor. C467 and C494 are joined by a disulfide.

The protein belongs to the peptidase M4 family. It depends on Ca(2+) as a cofactor. The cofactor is Zn(2+). Post-translationally, made as a pre-pro-protein which is exported to the periplasm. Probably autocatalyzes cleavage of its pro-peptide. The pro-peptide can be secreted with mature elastase.

Its subcellular location is the secreted. It carries out the reaction Hydrolysis of proteins including elastin, collagen types III and IV, fibronectin and immunoglobulin A, generally with bulky hydrophobic group at P1'. Insulin B chain cleavage pattern identical to that of thermolysin, but specificity differs in other respects.. Its function is as follows. Cleaves host elastase, collagen, IgI and several complement components as well as endogenous pro-aminopeptidase, pro-chitin-binding protein (cbpD). Cleaves its own pro-peptide. Involved in the pathogenesis of P.aeruginosa infections. The protein is Elastase (lasB) of Pseudomonas aeruginosa (strain UCBPP-PA14).